Here is a 334-residue protein sequence, read N- to C-terminus: Glyceraldehyde-3-phosphate dehydrogenase (334 aa).

NAD(+) contacts are provided by residues 10 to 11, Asp-33, Lys-77, and Thr-119; that span reads RI. D-glyceraldehyde 3-phosphate-binding positions include 149–151, Thr-180, 209–210, and Arg-232; these read SCT and TG. Catalysis depends on Cys-150, which acts as the Nucleophile. Asn-314 serves as a coordination point for NAD(+).

The protein belongs to the glyceraldehyde-3-phosphate dehydrogenase family. In terms of assembly, homotetramer.

The protein localises to the cytoplasm. The catalysed reaction is D-glyceraldehyde 3-phosphate + phosphate + NAD(+) = (2R)-3-phospho-glyceroyl phosphate + NADH + H(+). Its pathway is carbohydrate degradation; glycolysis; pyruvate from D-glyceraldehyde 3-phosphate: step 1/5. Functionally, catalyzes the oxidative phosphorylation of glyceraldehyde 3-phosphate (G3P) to 1,3-bisphosphoglycerate (BPG) using the cofactor NAD. The first reaction step involves the formation of a hemiacetal intermediate between G3P and a cysteine residue, and this hemiacetal intermediate is then oxidized to a thioester, with concomitant reduction of NAD to NADH. The reduced NADH is then exchanged with the second NAD, and the thioester is attacked by a nucleophilic inorganic phosphate to produce BPG. The protein is Glyceraldehyde-3-phosphate dehydrogenase (gap) of Chlamydia trachomatis serovar L2 (strain ATCC VR-902B / DSM 19102 / 434/Bu).